The chain runs to 640 residues: Chaperone protein HtpG (640 aa).

Residues 1–343 are a; substrate-binding; it reads MQTAENVEHL…SNDLPLNVSR (343 aa). A b region spans residues 344-564; sequence EILQESKDID…THDMSGNLGR (221 aa). The segment at 565–640 is c; it reads LLKSAGQKVP…LLLQNILSGK (76 aa).

Belongs to the heat shock protein 90 family. In terms of assembly, homodimer.

It localises to the cytoplasm. Its function is as follows. Molecular chaperone. Has ATPase activity. In Nitrosomonas eutropha (strain DSM 101675 / C91 / Nm57), this protein is Chaperone protein HtpG.